A 350-amino-acid polypeptide reads, in one-letter code: Biotin synthase (350 aa).

Positions 1–13 (MVTQAATRPSNDA) are enriched in polar residues. The segment at 1–20 (MVTQAATRPSNDAGQDGVTE) is disordered. In terms of domain architecture, Radical SAM core spans 71–296 (PEVEVEGIIS…RTMLRFAGGR (226 aa)). [4Fe-4S] cluster is bound by residues C86, C90, and C93. 4 residues coordinate [2Fe-2S] cluster: C129, C162, C221, and R291.

Belongs to the radical SAM superfamily. Biotin synthase family. As to quaternary structure, homodimer. [4Fe-4S] cluster serves as cofactor. Requires [2Fe-2S] cluster as cofactor.

It catalyses the reaction (4R,5S)-dethiobiotin + (sulfur carrier)-SH + 2 reduced [2Fe-2S]-[ferredoxin] + 2 S-adenosyl-L-methionine = (sulfur carrier)-H + biotin + 2 5'-deoxyadenosine + 2 L-methionine + 2 oxidized [2Fe-2S]-[ferredoxin]. It participates in cofactor biosynthesis; biotin biosynthesis; biotin from 7,8-diaminononanoate: step 2/2. Functionally, catalyzes the conversion of dethiobiotin (DTB) to biotin by the insertion of a sulfur atom into dethiobiotin via a radical-based mechanism. The sequence is that of Biotin synthase from Mycobacterium ulcerans (strain Agy99).